The sequence spans 926 residues: Protein translocase subunit SecA (926 aa).

ATP is bound by residues Gln-87, 105-109, and Asp-512; that span reads GEGKT. Zn(2+)-binding residues include Cys-911, Cys-913, Cys-922, and His-923.

The protein belongs to the SecA family. Monomer and homodimer. Part of the essential Sec protein translocation apparatus which comprises SecA, SecYEG and auxiliary proteins SecDF-YajC and YidC. Requires Zn(2+) as cofactor.

It localises to the cell inner membrane. The protein resides in the cytoplasm. The enzyme catalyses ATP + H2O + cellular proteinSide 1 = ADP + phosphate + cellular proteinSide 2.. Functionally, part of the Sec protein translocase complex. Interacts with the SecYEG preprotein conducting channel. Has a central role in coupling the hydrolysis of ATP to the transfer of proteins into and across the cell membrane, serving both as a receptor for the preprotein-SecB complex and as an ATP-driven molecular motor driving the stepwise translocation of polypeptide chains across the membrane. The polypeptide is Protein translocase subunit SecA (Psychrobacter cryohalolentis (strain ATCC BAA-1226 / DSM 17306 / VKM B-2378 / K5)).